Here is a 498-residue protein sequence, read N- to C-terminus: Glycerol kinase (498 aa).

Residue Thr12 participates in ADP binding. Positions 12, 13, and 14 each coordinate ATP. Thr12 contacts sn-glycerol 3-phosphate. An ADP-binding site is contributed by Arg16. The sn-glycerol 3-phosphate site is built by Arg82, Glu83, Tyr134, and Asp244. Residues Arg82, Glu83, Tyr134, Asp244, and Gln245 each contribute to the glycerol site. ADP-binding residues include Thr266 and Gly310. The ATP site is built by Thr266, Gly310, Gln314, and Gly411. The ADP site is built by Gly411 and Asn415.

The protein belongs to the FGGY kinase family.

It carries out the reaction glycerol + ATP = sn-glycerol 3-phosphate + ADP + H(+). It participates in polyol metabolism; glycerol degradation via glycerol kinase pathway; sn-glycerol 3-phosphate from glycerol: step 1/1. With respect to regulation, inhibited by fructose 1,6-bisphosphate (FBP). Its function is as follows. Key enzyme in the regulation of glycerol uptake and metabolism. Catalyzes the phosphorylation of glycerol to yield sn-glycerol 3-phosphate. In Azorhizobium caulinodans (strain ATCC 43989 / DSM 5975 / JCM 20966 / LMG 6465 / NBRC 14845 / NCIMB 13405 / ORS 571), this protein is Glycerol kinase.